Here is a 130-residue protein sequence, read N- to C-terminus: Splicing regulatory small protein (130 aa).

Positions 1–10 are enriched in basic residues; it reads MRTKPQRPRA. Disordered stretches follow at residues 1-29 and 74-130; these read MRTK…EETG and GRAL…STRR. The segment at 16–22 is mediates interaction with SRSF3; it reads GQPCGSP. A compositionally biased stretch (basic and acidic residues) spans 77–98; that stretch reads LEPKADPHTCPYGRKESRGEKV. Polar residues predominate over residues 120-130; sequence SLKSGSPSTRR.

As to quaternary structure, interacts with SRSF3; increases SRSF3 binding to specific exons.

Its subcellular location is the nucleus. Interacts with the splicing factor SRSF3 and increases its binding to specific exons within pre-mRNA, thereby regulating exon-inclusion during alternative splicing. Does not directly bind pre-mRNA and could regulate a wider range of splicing factors through a similar mechanism. The polypeptide is Splicing regulatory small protein (Homo sapiens (Human)).